The following is a 439-amino-acid chain: Nuclear hormone receptor family member nhr-97 (439 aa).

The segment covering 1-13 has biased composition (polar residues); it reads MSGDAQPSSNQRA. Residues 1-22 form a disordered region; it reads MSGDAQPSSNQRATEARPPPSP. Positions 32–108 form a DNA-binding region, nuclear receptor; that stretch reads GALCVVCGDR…VGMKIEAVKM (77 aa). 2 consecutive NR C4-type zinc fingers follow at residues 35-56 and 72-96; these read CVVC…CHGC and CRYG…FHRC. Residues 112–135 are disordered; sequence LTKRKKEKTDEDDTDDGGSHESFE. The NR LBD domain maps to 173-408; it reads FVQPSLQNLL…GEGLLFWQLY (236 aa).

It belongs to the nuclear hormone receptor family.

The protein resides in the nucleus. Its function is as follows. Orphan nuclear receptor. This Caenorhabditis elegans protein is Nuclear hormone receptor family member nhr-97 (nhr-97).